A 1176-amino-acid polypeptide reads, in one-letter code: Carbamoyl phosphate synthase arginine-specific large chain (1176 aa).

The N-terminal 11 residues, 1–11 (MLRSISIASRA), are a transit peptide targeting the mitochondrion. The carboxyphosphate synthetic domain stretch occupies residues 70–465 (SRSPDVKKVL…SLQKAIRQVD (396 aa)). ATP is bound by residues Arg197, Arg237, Gly243, Gly244, Lys273, Leu275, Glu280, Gly306, Thr307, His308, Gln348, and Glu362. The ATP-grasp 1 domain occupies 201-391 (VQALNEIDIP…LAYTAAKIAL (191 aa)). Mg(2+)-binding residues include Gln348, Glu362, and Asn364. Positions 348, 362, and 364 each coordinate Mn(2+). The interval 466–610 (PNFAGFEAYW…YTSYNATTHD (145 aa)) is oligomerization domain. Positions 611-997 (VKFDNGTMVL…AYWAALLSVN (387 aa)) are carbamoyl phosphate synthetic domain. The region spanning 734-931 (SSILDSIGVD…FIDTASAAIM (198 aa)) is the ATP-grasp 2 domain. ATP-binding residues include Arg770, Gln809, Ile811, Glu816, Gly841, Val842, His843, Ser844, Gln884, and Glu902. Gln884, Glu902, and Asn904 together coordinate Mg(2+). Mn(2+) is bound by residues Gln884, Glu902, and Asn904. Residues 998 to 1137 (GMKLPKANSG…NPIPYSEGFK (140 aa)) form an allosteric domain region. Positions 999–1154 (MKLPKANSGI…RDFVGEAATT (156 aa)) constitute an MGS-like domain.

The protein belongs to the CarB family. Heterodimer composed of 2 chains; the small (or glutamine) chain promotes the hydrolysis of glutamine to ammonia, which is used by the large (or ammonia) chain to synthesize carbamoyl phosphate. Mg(2+) serves as cofactor. It depends on Mn(2+) as a cofactor.

Its subcellular location is the mitochondrion. It catalyses the reaction hydrogencarbonate + L-glutamine + 2 ATP + H2O = carbamoyl phosphate + L-glutamate + 2 ADP + phosphate + 2 H(+). The enzyme catalyses hydrogencarbonate + NH4(+) + 2 ATP = carbamoyl phosphate + 2 ADP + phosphate + 2 H(+). It participates in amino-acid biosynthesis; L-arginine biosynthesis; carbamoyl phosphate from bicarbonate: step 1/1. In terms of biological role, large subunit of the arginine-specific carbamoyl phosphate synthase (CPSase). CPSase catalyzes the formation of carbamoyl phosphate from the ammonia moiety of glutamine, hydrogencarbonate, and phosphate donated by ATP, constituting the first step of 2 biosynthetic pathways, one leading to arginine and/or urea and the other to pyrimidine nucleotides. The large subunit (synthetase) binds the substrates ammonia (free or transferred from glutamine from the small subunit), hydrogencarbonate and ATP and carries out an ATP-coupled ligase reaction, activating hydrogencarbonate by forming carboxy phosphate which reacts with ammonia to form carbamoyl phosphate. This chain is Carbamoyl phosphate synthase arginine-specific large chain (argA), found in Cutaneotrichosporon cutaneum (Yeast).